The following is a 2684-amino-acid chain: Teneurin-1 (2684 aa).

3 disordered regions span residues 1–37, 127–156, and 170–204; these read MFQH…HDYT, TTSS…PTYS, and GTNQ…KKFD. At 1–216 the chain is on the cytoplasmic side; it reads MFQHRTTNAQ…SDTCSRWPSK (216 aa). Over residues 11-24 the composition is skewed to pro residues; that stretch reads GPPPNRPMPRPPAG. The span at 127-136 shows a compositional bias: low complexity; that stretch reads TTSSTLSPAS. Residues 217 to 237 traverse the membrane as a helical segment; the sequence is WNILLAAALLVALFVICILLF. The Extracellular portion of the chain corresponds to 238–2684; it reads RAPNYVYTQP…VHSWKFRKSE (2447 aa). EGF-like domains lie at 463-499 and 501-534; these read TGRT…KECE and RHNW…EACE. 6 disulfide bridges follow: cysteine 467–cysteine 476, cysteine 472–cysteine 487, cysteine 489–cysteine 498, cysteine 505–cysteine 516, cysteine 510–cysteine 522, and cysteine 524–cysteine 533. Positions 576-614 are disordered; it reads PQAQSPPRRGQEPTESSKTRKAQVKPTPTSEKKKESREL. 2 stretches are compositionally biased toward basic and acidic residues: residues 584 to 593 and 605 to 614; these read RGQEPTESSK and SEKKKESREL. 2 EGF-like domains span residues 650 to 684 and 716 to 753; these read DSVD…SNCT and AIDG…VDCS. 6 disulfides stabilise this stretch: cysteine 654-cysteine 666, cysteine 659-cysteine 672, cysteine 674-cysteine 683, cysteine 720-cysteine 730, cysteine 724-cysteine 741, and cysteine 743-cysteine 752. NHL repeat units follow at residues 1276–1317, 1334–1378, 1398–1441, and 1470–1513; these read DSCG…IDTT, RTCA…VVHD, SASA…VRKL, and AVSL…VSAR.

This sequence belongs to the tenascin family. Teneurin subfamily. In terms of processing, probably proteolytically processed to generate a N-terminal intracellular domain. In terms of tissue distribution, isoform 1 is mainly expressed in organs derived from the mesoderm, including the pharynx, vulva muscles, gonad distal tip cells, intestine and several tail neurons. Isoform 2 is mainly expressed in the organs derived from the ectoderm, including hypodermal cells, head ganglion neurons and tail neurons (at protein level).

Its subcellular location is the nucleus. It localises to the cell membrane. The protein resides in the membrane. Plays a role in the gonadal basement membrane maintenance and/or adhesion early in development. Contributes to the guidance of pharyngeal neurons. The protein is Teneurin-1 (ten-1) of Caenorhabditis elegans.